A 114-amino-acid polypeptide reads, in one-letter code: UPF0102 protein HPG27_782 (114 aa).

This sequence belongs to the UPF0102 family.

The polypeptide is UPF0102 protein HPG27_782 (Helicobacter pylori (strain G27)).